A 637-amino-acid polypeptide reads, in one-letter code: tRNA uridine 5-carboxymethylaminomethyl modification enzyme MnmG (637 aa).

14-19 (GAGHAG) lines the FAD pocket. Residue 279–293 (GPRYCPSIEDKVVRF) participates in NAD(+) binding.

This sequence belongs to the MnmG family. In terms of assembly, homodimer. Heterotetramer of two MnmE and two MnmG subunits. Requires FAD as cofactor.

It is found in the cytoplasm. In terms of biological role, NAD-binding protein involved in the addition of a carboxymethylaminomethyl (cmnm) group at the wobble position (U34) of certain tRNAs, forming tRNA-cmnm(5)s(2)U34. This is tRNA uridine 5-carboxymethylaminomethyl modification enzyme MnmG from Desulfitobacterium hafniense (strain DSM 10664 / DCB-2).